Reading from the N-terminus, the 608-residue chain is MKGRSDGGQKKRVIALVCVAAVVLVFVYLFYGSSDHRASAIEYGRKLGLGGDDDDTKQDDTSSSFGVDDGFTPRSFPVCDDRHSELIPCLDRNLIYQMRLKLDLSLMEHYERHCPPPERRFNCLIPPPNGYKVPIKWPKSRDEVWKVNIPHTHLAHEKSDQNWMVVKGDKINFPGGGTHFHYGADKYIASMANMLNYPNNVLNNGGRLRTVFDVGCGVASFGGYLLSSDILTMSLAPNDVHQNQIQFALERGIPASLGVLGTKRLPYPSRSFELSHCSRCRIDWLQRDGILLLELDRVLRPGGYFAYSSPEAYAQDEEDLRIWREMSALVERMCWKIAAKRNQTVIWQKPLTNDCYLEREPGTQPPLCRSDNDPDAVWGVNMEACITSYSDHDHKTKGSGLAPWPARLTSPPPRLADFGYSTGMFEKDTELWRQRVDTYWDLLSPRIESDTVRNIMDMKASMGSFAAALKEKDVWVMNVVPEDGPNTLKLIYDRGLMGAVHSWCEAFSTYPRTYDLLHAWDIISDIKKKGCSEVDLLLEMDRILRPSGFIIIRDKQRVVDFVKKYLKALHWEEVGTKTDSDSDQDSDNVVFIVQKKLWLTSESLRDME.

Residues 1 to 12 (MKGRSDGGQKKR) lie on the Cytoplasmic side of the membrane. A helical; Signal-anchor for type II membrane protein membrane pass occupies residues 13-33 (VIALVCVAAVVLVFVYLFYGS). Residues 34–608 (SDHRASAIEY…LTSESLRDME (575 aa)) lie on the Lumenal side of the membrane. Residue asparagine 342 is glycosylated (N-linked (GlcNAc...) asparagine).

The protein belongs to the methyltransferase superfamily.

The protein resides in the golgi apparatus membrane. This Arabidopsis thaliana (Mouse-ear cress) protein is Probable methyltransferase PMT3.